Consider the following 459-residue polypeptide: UDP-N-acetylmuramoylalanine--D-glutamate ligase (459 aa).

An ATP-binding site is contributed by 118–124 (GTNGKTT).

The protein belongs to the MurCDEF family.

The protein resides in the cytoplasm. The enzyme catalyses UDP-N-acetyl-alpha-D-muramoyl-L-alanine + D-glutamate + ATP = UDP-N-acetyl-alpha-D-muramoyl-L-alanyl-D-glutamate + ADP + phosphate + H(+). It participates in cell wall biogenesis; peptidoglycan biosynthesis. Functionally, cell wall formation. Catalyzes the addition of glutamate to the nucleotide precursor UDP-N-acetylmuramoyl-L-alanine (UMA). This chain is UDP-N-acetylmuramoylalanine--D-glutamate ligase, found in Desulfosudis oleivorans (strain DSM 6200 / JCM 39069 / Hxd3) (Desulfococcus oleovorans).